The primary structure comprises 984 residues: Hyaluronate lyase (984 aa).

Composition is skewed to polar residues over residues 1-12 (MKQVVDNQTQNK), 19-32 (DFNQ…SWSH), and 54-66 (IQRT…SLSS). Disordered stretches follow at residues 1-32 (MKQV…SWSH) and 49-68 (DKSP…SSDK). Positions 1 to 40 (MKQVVDNQTQNKELVKNGDFNQTNPVSGSWSHTSAREWSA) are cleaved as a signal peptide. Catalysis depends on residues Asn429, His479, and Tyr488. The segment covering 701 to 726 (TEKDAKREDTTKEFMSKHSKDAKEKT) has biased composition (basic and acidic residues). The tract at residues 701 to 728 (TEKDAKREDTTKEFMSKHSKDAKEKTGQ) is disordered.

The protein belongs to the polysaccharide lyase 8 family.

Its subcellular location is the secreted. It catalyses the reaction [hyaluronan](n) = n 3-(4-deoxy-beta-D-gluc-4-enuronosyl)-N-acetyl-D-glucosamine + H2O. The polypeptide is Hyaluronate lyase (Streptococcus agalactiae serotype III (strain NEM316)).